Consider the following 945-residue polypeptide: Xylosyltransferase 1 (945 aa).

Residues 1–17 (MQAAPCARRLARRSHSA) lie on the Cytoplasmic side of the membrane. Residues 18–38 (LLAALTVLLLQTLVVWNFSSL) form a helical; Signal-anchor for type II membrane protein membrane-spanning segment. At 39–945 (DSGAGERRGG…GAVKPDGRLR (907 aa)) the chain is on the lumenal side. Positions 42-245 (AGERRGGAAV…KYDQPPKCDI (204 aa)) are disordered. Positions 76-103 (RGGGGGGGGCGGGGRGPQARARGGGPGE) are enriched in gly residues. Positions 131–147 (KVRTDSNNENSVPKDFE) are enriched in basic and acidic residues. Residues 149–158 (VDNSNFAPRT) are compositionally biased toward polar residues. A compositionally biased stretch (basic and acidic residues) spans 163 to 190 (HQPELAKKPPSRQKELLKRKLEQQEKGK). N-linked (GlcNAc...) asparagine glycosylation occurs at asparagine 212. Positions 235–245 (TKYDQPPKCDI) are enriched in basic and acidic residues. 4 disulfide bridges follow: cysteine 243-cysteine 271, cysteine 287-cysteine 528, cysteine 547-cysteine 560, and cysteine 549-cysteine 558. UDP-alpha-D-xylose-binding positions include valine 319, aspartate 347, and 376–378 (TIW). Asparagine 407 is a glycosylation site (N-linked (GlcNAc...) asparagine). Residue 480–481 (DW) participates in UDP-alpha-D-xylose binding. UDP-alpha-D-xylose is bound by residues serine 561 and 584–585 (RK). Intrachain disulfides connect cysteine 661–cysteine 913 and cysteine 906–cysteine 919. Asparagine 763 is a glycosylation site (N-linked (GlcNAc...) asparagine). A disordered region spans residues 926-945 (SFSPDPKSELGAVKPDGRLR).

It belongs to the glycosyltransferase 14 family. XylT subfamily. As to quaternary structure, monomer. A divalent metal cation is required as a cofactor. Post-translationally, contains 7 disulfide bonds. N-glycosylated.

The protein localises to the golgi apparatus membrane. The catalysed reaction is UDP-alpha-D-xylose + L-seryl-[protein] = 3-O-(beta-D-xylosyl)-L-seryl-[protein] + UDP + H(+). The protein operates within glycan metabolism; chondroitin sulfate biosynthesis. Its pathway is glycan metabolism; heparan sulfate biosynthesis. In terms of biological role, catalyzes the first step in the biosynthesis of chondroitin sulfate and dermatan sulfate proteoglycans, such as DCN. Transfers D-xylose from UDP-D-xylose to specific serine residues of the core protein. Required for normal maturation of chondrocytes during bone development, normal onset of ossification and normal embryonic and postnatal skeleton development, especially of the long bones. The sequence is that of Xylosyltransferase 1 (XYLT1) from Pan troglodytes (Chimpanzee).